The primary structure comprises 169 residues: MVVLGRIAGPHGIRGQIKVIPFTEYVDGLMEYPVWCLSRDEKNWQIVRPATFFIHDNLLIVTLTGYSDRTSASELKGLLVAVPRSQLPPLSKDGEDGYYWTDLIGISVVNMQGEPLGTVAGLFETGANDVLRVRLSGSSKDELIPFVDQVIRQVDLESRQITVDWELGY.

Positions 95-169 (EDGYYWTDLI…QITVDWELGY (75 aa)) constitute a PRC barrel domain.

The protein belongs to the RimM family. As to quaternary structure, binds ribosomal protein uS19.

It localises to the cytoplasm. In terms of biological role, an accessory protein needed during the final step in the assembly of 30S ribosomal subunit, possibly for assembly of the head region. Essential for efficient processing of 16S rRNA. May be needed both before and after RbfA during the maturation of 16S rRNA. It has affinity for free ribosomal 30S subunits but not for 70S ribosomes. The protein is Ribosome maturation factor RimM of Nitrosomonas europaea (strain ATCC 19718 / CIP 103999 / KCTC 2705 / NBRC 14298).